The chain runs to 144 residues: Large ribosomal subunit protein uL16 (144 aa).

Over residues 1–19 (MLLPKRVKYRRQHRPKTTG) the composition is skewed to basic residues. The segment at 1 to 23 (MLLPKRVKYRRQHRPKTTGRSKG) is disordered.

Belongs to the universal ribosomal protein uL16 family. In terms of assembly, part of the 50S ribosomal subunit.

Binds 23S rRNA and is also seen to make contacts with the A and possibly P site tRNAs. The polypeptide is Large ribosomal subunit protein uL16 (Staphylococcus haemolyticus (strain JCSC1435)).